We begin with the raw amino-acid sequence, 195 residues long: Imidazoleglycerol-phosphate dehydratase (195 aa).

It belongs to the imidazoleglycerol-phosphate dehydratase family.

It is found in the cytoplasm. It catalyses the reaction D-erythro-1-(imidazol-4-yl)glycerol 3-phosphate = 3-(imidazol-4-yl)-2-oxopropyl phosphate + H2O. It participates in amino-acid biosynthesis; L-histidine biosynthesis; L-histidine from 5-phospho-alpha-D-ribose 1-diphosphate: step 6/9. This chain is Imidazoleglycerol-phosphate dehydratase, found in Trichlorobacter lovleyi (strain ATCC BAA-1151 / DSM 17278 / SZ) (Geobacter lovleyi).